Here is a 466-residue protein sequence, read N- to C-terminus: 3-isopropylmalate dehydratase large subunit (466 aa).

[4Fe-4S] cluster contacts are provided by Cys-347, Cys-407, and Cys-410.

Belongs to the aconitase/IPM isomerase family. LeuC type 1 subfamily. In terms of assembly, heterodimer of LeuC and LeuD. [4Fe-4S] cluster serves as cofactor.

The enzyme catalyses (2R,3S)-3-isopropylmalate = (2S)-2-isopropylmalate. It participates in amino-acid biosynthesis; L-leucine biosynthesis; L-leucine from 3-methyl-2-oxobutanoate: step 2/4. Its function is as follows. Catalyzes the isomerization between 2-isopropylmalate and 3-isopropylmalate, via the formation of 2-isopropylmaleate. This Escherichia coli O157:H7 protein is 3-isopropylmalate dehydratase large subunit.